Reading from the N-terminus, the 330-residue chain is Negative regulator of the PHO system (330 aa).

A Protein kinase domain is found at 8 to 290; that stretch reads FQQLEKLGEG…ARQALQHPWF (283 aa). ATP is bound by residues 14 to 22 and lysine 37; that span reads LGEGTYATV. The active-site Proton acceptor is the aspartate 131. The tract at residues 300–330 is disordered; that stretch reads MQHLADPYQQSQQQSQQQAQQSQQMDPQTYR. The segment covering 308–323 has biased composition (low complexity); the sequence is QQSQQQSQQQAQQSQQ.

This sequence belongs to the protein kinase superfamily. CMGC Ser/Thr protein kinase family. CDC2/CDKX subfamily. As to quaternary structure, interacts with a number of cyclins.

The catalysed reaction is L-seryl-[protein] + ATP = O-phospho-L-seryl-[protein] + ADP + H(+). The enzyme catalyses L-threonyl-[protein] + ATP = O-phospho-L-threonyl-[protein] + ADP + H(+). Functionally, when phosphate concentrations are high it phosphorylates the PHO4 transcription factor thus establishing repression. This is Negative regulator of the PHO system (PHO85) from Debaryomyces hansenii (strain ATCC 36239 / CBS 767 / BCRC 21394 / JCM 1990 / NBRC 0083 / IGC 2968) (Yeast).